A 205-amino-acid chain; its full sequence is Small ribosomal subunit protein uS4 (205 aa).

The tract at residues 1 to 46 (MSKRHSAKYKIDRRMGENLWGRPKSPVNSRSYGPGQHGQRRKSKVS) is disordered. In terms of domain architecture, S4 RNA-binding spans 94 to 154 (SRLDAIVYRA…EKSRNMALVL (61 aa)).

It belongs to the universal ribosomal protein uS4 family. In terms of assembly, part of the 30S ribosomal subunit. Contacts protein S5. The interaction surface between S4 and S5 is involved in control of translational fidelity.

Its function is as follows. One of the primary rRNA binding proteins, it binds directly to 16S rRNA where it nucleates assembly of the body of the 30S subunit. With S5 and S12 plays an important role in translational accuracy. In Caulobacter vibrioides (strain ATCC 19089 / CIP 103742 / CB 15) (Caulobacter crescentus), this protein is Small ribosomal subunit protein uS4.